We begin with the raw amino-acid sequence, 298 residues long: Transcription factor RHD6 (298 aa).

2 disordered regions span residues 1-58 (MALV…SDHQ) and 157-213 (TGSR…AKNR). Residues 15-27 (SKQNSSSSEDLSS) are compositionally biased toward low complexity. Polar residues-rich tracts occupy residues 157-168 (TGSRNESLSPKS) and 177-190 (GEST…SSGV). Residues 191–205 (TGKTKPKPTTSPKDP) show a composition bias toward low complexity. Residues 201-214 (SPKDPQSLAAKNRR) are basic motif. The bHLH domain maps to 201-250 (SPKDPQSLAAKNRRERISERLKILQELVPNGTKVDLVTMLEKAISYVKFL). The interval 215-250 (ERISERLKILQELVPNGTKVDLVTMLEKAISYVKFL) is helix-loop-helix motif.

In terms of assembly, homodimer. Forms heterodimers with RSL1. Interacts with TIFY10B/JAZ2, TIFY6A/JAZ4, TIFY5A/JAZ8, TIFY7/JAZ9 and TIFY9/JAZ10. As to expression, expressed constitutively in flowers. Expressed in root epidermal hair cells.

It is found in the nucleus. Its function is as follows. Transcription factor that is specifically required for the development of root hairs. Acts with RSL1 to positively regulate root hair development. Acts downstream of genes that regulate epidermal pattern formation, such as GL2. Targets directly RSL4, another transcription factor involved in the regulation of root hair elongation. Acts with RSL1 as transcription factor that integrates a jasmonate (JA) signaling pathway that stimulates root hair growth. This Arabidopsis thaliana (Mouse-ear cress) protein is Transcription factor RHD6.